The following is a 431-amino-acid chain: Glutamate-1-semialdehyde 2,1-aminomutase (431 aa).

Lysine 269 is modified (N6-(pyridoxal phosphate)lysine).

Belongs to the class-III pyridoxal-phosphate-dependent aminotransferase family. HemL subfamily. In terms of assembly, homodimer. Pyridoxal 5'-phosphate serves as cofactor.

It is found in the cytoplasm. The enzyme catalyses (S)-4-amino-5-oxopentanoate = 5-aminolevulinate. Its pathway is porphyrin-containing compound metabolism; protoporphyrin-IX biosynthesis; 5-aminolevulinate from L-glutamyl-tRNA(Glu): step 2/2. The sequence is that of Glutamate-1-semialdehyde 2,1-aminomutase from Tolumonas auensis (strain DSM 9187 / NBRC 110442 / TA 4).